Here is a 159-residue protein sequence, read N- to C-terminus: Protein-export protein SecB (159 aa).

The protein belongs to the SecB family. Homotetramer, a dimer of dimers. One homotetramer interacts with 1 SecA dimer.

It localises to the cytoplasm. In terms of biological role, one of the proteins required for the normal export of preproteins out of the cell cytoplasm. It is a molecular chaperone that binds to a subset of precursor proteins, maintaining them in a translocation-competent state. It also specifically binds to its receptor SecA. The protein is Protein-export protein SecB of Pseudomonas fluorescens (strain ATCC BAA-477 / NRRL B-23932 / Pf-5).